Reading from the N-terminus, the 275-residue chain is Probable dual specificity protein phosphatase DDB_G0271350 (275 aa).

The Tyrosine-protein phosphatase domain occupies 2–143; sequence GISMILDNFL…LCDLELKLTN (142 aa). Residue cysteine 87 is the Phosphocysteine intermediate of the active site.

This sequence belongs to the protein-tyrosine phosphatase family. Non-receptor class dual specificity subfamily.

The enzyme catalyses O-phospho-L-tyrosyl-[protein] + H2O = L-tyrosyl-[protein] + phosphate. The catalysed reaction is O-phospho-L-seryl-[protein] + H2O = L-seryl-[protein] + phosphate. It catalyses the reaction O-phospho-L-threonyl-[protein] + H2O = L-threonyl-[protein] + phosphate. In terms of biological role, has a dual specificity toward Ser/Thr and Tyr-containing proteins. The chain is Probable dual specificity protein phosphatase DDB_G0271350 from Dictyostelium discoideum (Social amoeba).